The following is a 428-amino-acid chain: uncharacterized protein (428 aa).

H68 provides a ligand contact to Zn(2+). E71 functions as the Proton acceptor in the catalytic mechanism. Residues H72 and E143 each coordinate Zn(2+).

This sequence belongs to the peptidase M16 family. Zn(2+) is required as a cofactor.

This is an uncharacterized protein from Bacillus subtilis (strain 168).